The primary structure comprises 82 residues: U1-theraphotoxin-Ct1b (82 aa).

An N-terminal signal peptide occupies residues 1–23 (MRTFTLIAILTCALLVIYHAAEA). Residues 24 to 44 (EELEAKDVIESKALATLDEER) constitute a propeptide that is removed on maturation.

This sequence belongs to the neurotoxin 12 (Hwtx-2) family. 03 (juruin) subfamily. Post-translationally, contains 3 disulfide bonds. Two different connectivities are observed in similar proteins (C1-C3, C2-C5, C4-C6 or C1-C4, C2-C5, C3-C6). As to expression, expressed by the venom gland.

The protein resides in the secreted. In terms of biological role, this toxin causes paralysis and death to sheep blowflies. It does not target insect sodium channels. The chain is U1-theraphotoxin-Ct1b from Coremiocnemis tropix (Australian tarantula spider).